The following is a 490-amino-acid chain: Glutamyl-tRNA(Gln) amidotransferase subunit A (490 aa).

Catalysis depends on charge relay system residues K81 and S156. S180 (acyl-ester intermediate) is an active-site residue.

This sequence belongs to the amidase family. GatA subfamily. In terms of assembly, heterotrimer of A, B and C subunits.

The enzyme catalyses L-glutamyl-tRNA(Gln) + L-glutamine + ATP + H2O = L-glutaminyl-tRNA(Gln) + L-glutamate + ADP + phosphate + H(+). Its function is as follows. Allows the formation of correctly charged Gln-tRNA(Gln) through the transamidation of misacylated Glu-tRNA(Gln) in organisms which lack glutaminyl-tRNA synthetase. The reaction takes place in the presence of glutamine and ATP through an activated gamma-phospho-Glu-tRNA(Gln). The chain is Glutamyl-tRNA(Gln) amidotransferase subunit A from Nocardia farcinica (strain IFM 10152).